Here is a 351-residue protein sequence, read N- to C-terminus: 3-dehydroquinate synthase (351 aa).

Residues 60–65 (DGEEYK), 94–98 (GVISD), 118–119 (TT), lysine 131, lysine 140, and 158–161 (FLKT) contribute to the NAD(+) site. Zn(2+) contacts are provided by glutamate 173, histidine 239, and histidine 256.

The protein belongs to the sugar phosphate cyclases superfamily. Dehydroquinate synthase family. Co(2+) is required as a cofactor. Zn(2+) serves as cofactor. Requires NAD(+) as cofactor.

The protein localises to the cytoplasm. It catalyses the reaction 7-phospho-2-dehydro-3-deoxy-D-arabino-heptonate = 3-dehydroquinate + phosphate. The protein operates within metabolic intermediate biosynthesis; chorismate biosynthesis; chorismate from D-erythrose 4-phosphate and phosphoenolpyruvate: step 2/7. Its function is as follows. Catalyzes the conversion of 3-deoxy-D-arabino-heptulosonate 7-phosphate (DAHP) to dehydroquinate (DHQ). This chain is 3-dehydroquinate synthase, found in Campylobacter jejuni subsp. doylei (strain ATCC BAA-1458 / RM4099 / 269.97).